A 169-amino-acid chain; its full sequence is Ribosome maturation factor RimP (169 aa).

The protein belongs to the RimP family.

Its subcellular location is the cytoplasm. Its function is as follows. Required for maturation of 30S ribosomal subunits. This is Ribosome maturation factor RimP from Pseudomonas putida (strain ATCC 700007 / DSM 6899 / JCM 31910 / BCRC 17059 / LMG 24140 / F1).